A 251-amino-acid chain; its full sequence is Adenylate kinase (251 aa).

ATP is bound at residue 46-51 (GAGKGT). The tract at residues 66–95 (ATGDMLRSQVQQQTPLGVEAKKIMDAGGLV) is NMP. Residues T67, R72, 93-95 (GLV), 122-125 (GFPR), and Q129 contribute to the AMP site. Residues 163–200 (GRLVHPASGRSYHKVFNPPKKEMIDDITGEALVQRSDD) form an LID region. ATP contacts are provided by residues R164 and 173–174 (SY). R197 and R208 together coordinate AMP. An ATP-binding site is contributed by Q236.

This sequence belongs to the adenylate kinase family. AK2 subfamily. In terms of assembly, monomer.

The protein localises to the cytoplasm. It is found in the cytosol. The protein resides in the mitochondrion intermembrane space. It catalyses the reaction AMP + ATP = 2 ADP. Its function is as follows. Catalyzes the reversible transfer of the terminal phosphate group between ATP and AMP. Plays an important role in cellular energy homeostasis and in adenine nucleotide metabolism. Adenylate kinase activity is critical for regulation of the phosphate utilization and the AMP de novo biosynthesis pathways. In Yarrowia lipolytica (strain CLIB 122 / E 150) (Yeast), this protein is Adenylate kinase.